The chain runs to 117 residues: Pterin-4-alpha-carbinolamine dehydratase 2 (117 aa).

3 positions are modified to N6-acetyllysine; alternate: Lys101, Lys105, and Lys112. Residues Lys101, Lys105, and Lys112 each carry the N6-succinyllysine; alternate modification.

The protein belongs to the pterin-4-alpha-carbinolamine dehydratase family. In terms of assembly, homotetramer. Interacts with DYRK1B.

It catalyses the reaction (4aS,6R)-4a-hydroxy-L-erythro-5,6,7,8-tetrahydrobiopterin = (6R)-L-erythro-6,7-dihydrobiopterin + H2O. Functionally, involved in tetrahydrobiopterin biosynthesis. Seems to both prevent the formation of 7-pterins and accelerate the formation of quinonoid-BH2. In terms of biological role, regulates the dimerization of homeodomain protein HNF-1-alpha and enhances its transcriptional activity. The polypeptide is Pterin-4-alpha-carbinolamine dehydratase 2 (PCBD2) (Pongo abelii (Sumatran orangutan)).